We begin with the raw amino-acid sequence, 427 residues long: Serine--tRNA ligase (427 aa).

231–233 (TAE) is an L-serine binding site. ATP is bound at residue 262–264 (RSE). L-serine is bound at residue glutamate 285. 349–352 (EISS) contributes to the ATP binding site. Serine 385 contacts L-serine.

Belongs to the class-II aminoacyl-tRNA synthetase family. Type-1 seryl-tRNA synthetase subfamily. As to quaternary structure, homodimer. The tRNA molecule binds across the dimer.

The protein resides in the cytoplasm. It carries out the reaction tRNA(Ser) + L-serine + ATP = L-seryl-tRNA(Ser) + AMP + diphosphate + H(+). The catalysed reaction is tRNA(Sec) + L-serine + ATP = L-seryl-tRNA(Sec) + AMP + diphosphate + H(+). It participates in aminoacyl-tRNA biosynthesis; selenocysteinyl-tRNA(Sec) biosynthesis; L-seryl-tRNA(Sec) from L-serine and tRNA(Sec): step 1/1. In terms of biological role, catalyzes the attachment of serine to tRNA(Ser). Is also able to aminoacylate tRNA(Sec) with serine, to form the misacylated tRNA L-seryl-tRNA(Sec), which will be further converted into selenocysteinyl-tRNA(Sec). This Rhizobium etli (strain ATCC 51251 / DSM 11541 / JCM 21823 / NBRC 15573 / CFN 42) protein is Serine--tRNA ligase.